A 623-amino-acid polypeptide reads, in one-letter code: Leucine aminopeptidase 2 (623 aa).

Residues 136–138 (QCQ) and 273–278 (PYGGME) contribute to the a peptide site. Position 302 (His302) interacts with Zn(2+). The Proton acceptor role is filled by Glu303. Zn(2+)-binding residues include His306 and Glu325. The active-site Proton donor is Tyr390.

This sequence belongs to the peptidase M1 family. Zn(2+) is required as a cofactor.

Its subcellular location is the cytoplasm. It is found in the nucleus. It catalyses the reaction an epoxide + H2O = an ethanediol. Functionally, aminopeptidase that preferentially cleaves di- and tripeptides. Also has low epoxide hydrolase activity (in vitro). Can hydrolyze the epoxide leukotriene LTA(4) but it forms preferentially 5,6-dihydroxy-7,9,11,14-eicosatetraenoic acid rather than the cytokine leukotriene B(4) as the product compared to the homologous mammalian enzyme (in vitro). In Phaeosphaeria nodorum (strain SN15 / ATCC MYA-4574 / FGSC 10173) (Glume blotch fungus), this protein is Leucine aminopeptidase 2.